Reading from the N-terminus, the 3102-residue chain is Laminin subunit alpha lam-3 (3102 aa).

Positions 1 to 16 are cleaved as a signal peptide; the sequence is MRLWLGLLAVSNIALG. N-linked (GlcNAc...) asparagine glycosylation is found at asparagine 19, asparagine 135, and asparagine 237. Residues 44–295 enclose the Laminin N-terminal domain; sequence SERGLFPNIF…SISDISIGGQ (252 aa). 16 disulfides stabilise this stretch: cysteine 296/cysteine 305, cysteine 298/cysteine 316, cysteine 318/cysteine 327, cysteine 330/cysteine 350, cysteine 353/cysteine 362, cysteine 355/cysteine 387, cysteine 390/cysteine 399, cysteine 402/cysteine 420, cysteine 423/cysteine 435, cysteine 425/cysteine 451, cysteine 453/cysteine 462, cysteine 465/cysteine 475, cysteine 478/cysteine 491, cysteine 480/cysteine 496, cysteine 498/cysteine 507, and cysteine 510/cysteine 525. Laminin EGF-like domains follow at residues 296-352, 353-422, 423-477, and 478-527; these read CICY…VCQQ, CQCF…ACRT, CECD…TCEP, and CPCN…GCQP. Residues 548–740 form the Laminin IV type A 1 domain; that stretch reads INNIGWHLTD…QDTLMGGVEV (193 aa). Cystine bridges form between cysteine 774-cysteine 783, cysteine 776-cysteine 790, cysteine 793-cysteine 802, cysteine 805-cysteine 822, cysteine 825-cysteine 838, cysteine 827-cysteine 858, cysteine 861-cysteine 870, cysteine 873-cysteine 886, cysteine 889-cysteine 903, cysteine 891-cysteine 910, cysteine 913-cysteine 922, cysteine 925-cysteine 938, cysteine 941-cysteine 953, cysteine 943-cysteine 960, cysteine 962-cysteine 971, cysteine 974-cysteine 985, cysteine 988-cysteine 1000, cysteine 990-cysteine 1007, cysteine 1009-cysteine 1018, cysteine 1021-cysteine 1033, cysteine 1036-cysteine 1049, cysteine 1038-cysteine 1056, cysteine 1058-cysteine 1067, cysteine 1070-cysteine 1083, cysteine 1086-cysteine 1098, cysteine 1088-cysteine 1105, cysteine 1107-cysteine 1116, cysteine 1119-cysteine 1131, cysteine 1134-cysteine 1144, cysteine 1137-cysteine 1151, and cysteine 1153-cysteine 1162. Laminin EGF-like domains are found at residues 774-824, 825-888, 889-940, 941-987, 988-1035, 1036-1085, 1086-1133, 1134-1180, 1181-1226, and 1227-1283; these read CDCH…ACEQ, CECP…KCIE, CTCN…TCKP, CGCH…GCPA, CDCN…GCQF, CHCN…GCED, CGCD…GCTE, CEPC…GCKL, CDCS…TCEP, and CGCN…GCTE. Asparagine 796 is a glycosylation site (N-linked (GlcNAc...) asparagine). Residue asparagine 991 is glycosylated (N-linked (GlcNAc...) asparagine). An N-linked (GlcNAc...) asparagine glycan is attached at asparagine 1027. Residue asparagine 1076 is glycosylated (N-linked (GlcNAc...) asparagine). A glycan (N-linked (GlcNAc...) asparagine) is linked at asparagine 1164. 9 cysteine pairs are disulfide-bonded: cysteine 1165–cysteine 1178, cysteine 1181–cysteine 1193, cysteine 1183–cysteine 1200, cysteine 1202–cysteine 1211, cysteine 1214–cysteine 1224, cysteine 1227–cysteine 1246, cysteine 1229–cysteine 1252, cysteine 1254–cysteine 1263, and cysteine 1266–cysteine 1281. N-linked (GlcNAc...) asparagine glycosylation is present at asparagine 1288. Residues 1295 to 1496 form the Laminin IV type A 2 domain; the sequence is QSDLVWQQMY…STTKAIGVEK (202 aa). Intrachain disulfides connect cysteine 1540–cysteine 1549, cysteine 1542–cysteine 1556, cysteine 1559–cysteine 1568, cysteine 1571–cysteine 1587, cysteine 1590–cysteine 1603, cysteine 1592–cysteine 1614, cysteine 1617–cysteine 1626, cysteine 1629–cysteine 1644, cysteine 1647–cysteine 1659, cysteine 1649–cysteine 1666, cysteine 1668–cysteine 1677, and cysteine 1680–cysteine 1691. Laminin EGF-like domains follow at residues 1540-1589, 1590-1646, and 1647-1693; these read CSCH…ACTK, CACP…TCSP, and CDCH…VCTS. N-linked (GlcNAc...) asparagine glycans are attached at residues asparagine 1717, asparagine 1734, asparagine 1777, asparagine 1806, asparagine 1839, asparagine 1875, asparagine 1969, asparagine 1984, and asparagine 2048. The disordered stretch occupies residues 2061–2084; sequence EAVSKMLGSEGSESGDANEESLRS. Residues asparagine 2091, asparagine 2193, asparagine 2369, and asparagine 2479 are each glycosylated (N-linked (GlcNAc...) asparagine). Laminin G-like domains are found at residues 2467 to 2644, 2652 to 2839, and 2913 to 3088; these read SQRG…TDGC, DKII…IGMC, and RYGL…AKAC. A disulfide bond links cysteine 2617 and cysteine 2644. Residues asparagine 2672 and asparagine 2686 are each glycosylated (N-linked (GlcNAc...) asparagine). The cysteines at positions 2814 and 2839 are disulfide-linked. N-linked (GlcNAc...) asparagine glycans are attached at residues asparagine 2932, asparagine 2959, and asparagine 3007. Cysteine 3058 and cysteine 3088 are disulfide-bonded.

Laminin is a complex glycoprotein, consisting of three different polypeptide chains (alpha, beta, gamma), which are bound to each other by disulfide bonds into a cross-shaped molecule comprising one long and three short arms with globules at each end.

The protein resides in the secreted. It localises to the extracellular space. It is found in the extracellular matrix. Its subcellular location is the basement membrane. In terms of biological role, binding to cells via a high affinity receptor, laminin is thought to mediate the attachment, migration and organization of cells into tissues during embryonic development by interacting with other extracellular matrix components. Required to assemble a stable basement membrane and for organizing receptor complexes and cytoskeletal components to the proper cell surfaces. During embryogenesis, does not require the presence of collagen type IV in order to associate with cell surfaces, prior to assembly of the prototypical basement membrane. Plays an important role in muscle contraction of the body. Probably plays a distinct role from the related laminin subunit alpha epi-1. The protein is Laminin subunit alpha lam-3 of Caenorhabditis elegans.